Here is a 98-residue protein sequence, read N- to C-terminus: Small ribosomal subunit protein bS6 (98 aa).

This sequence belongs to the bacterial ribosomal protein bS6 family.

Binds together with bS18 to 16S ribosomal RNA. This Moorella thermoacetica (strain ATCC 39073 / JCM 9320) protein is Small ribosomal subunit protein bS6.